The sequence spans 365 residues: Anhydro-N-acetylmuramic acid kinase (365 aa).

12-19 (GTSLDGID) serves as a coordination point for ATP.

This sequence belongs to the anhydro-N-acetylmuramic acid kinase family.

The catalysed reaction is 1,6-anhydro-N-acetyl-beta-muramate + ATP + H2O = N-acetyl-D-muramate 6-phosphate + ADP + H(+). It functions in the pathway amino-sugar metabolism; 1,6-anhydro-N-acetylmuramate degradation. The protein operates within cell wall biogenesis; peptidoglycan recycling. In terms of biological role, catalyzes the specific phosphorylation of 1,6-anhydro-N-acetylmuramic acid (anhMurNAc) with the simultaneous cleavage of the 1,6-anhydro ring, generating MurNAc-6-P. Is required for the utilization of anhMurNAc either imported from the medium or derived from its own cell wall murein, and thus plays a role in cell wall recycling. This is Anhydro-N-acetylmuramic acid kinase from Rhizorhabdus wittichii (strain DSM 6014 / CCUG 31198 / JCM 15750 / NBRC 105917 / EY 4224 / RW1) (Sphingomonas wittichii).